Here is a 226-residue protein sequence, read N- to C-terminus: PKHD-type hydroxylase TERTU_2553 (226 aa).

The Fe2OG dioxygenase domain maps to 78–177 (KIYPPKFNCY…RVASFIWIQS (100 aa)). Positions 96, 98, and 158 each coordinate Fe cation. Arg168 is a 2-oxoglutarate binding site.

Fe(2+) is required as a cofactor. Requires L-ascorbate as cofactor.

The sequence is that of PKHD-type hydroxylase TERTU_2553 from Teredinibacter turnerae (strain ATCC 39867 / T7901).